Reading from the N-terminus, the 159-residue chain is MMMDILMYLFETYIHSDAELQVEQDELEDELLRAGFQQKDIYKALVWLEELAALQQSDEHSAISTCIASASTRIYTASEMQRLDLECRGFLLFLEQINVLTTETREMVIDRVMGLETNEFELEDLKWIILMVLFNVPGNENAYTLMEELLYTKEQGILH.

The protein belongs to the Smg family.

This is Protein Smg homolog from Vibrio campbellii (strain ATCC BAA-1116).